Here is a 426-residue protein sequence, read N- to C-terminus: Histidine--tRNA ligase (426 aa).

Belongs to the class-II aminoacyl-tRNA synthetase family. Homodimer.

It is found in the cytoplasm. It catalyses the reaction tRNA(His) + L-histidine + ATP = L-histidyl-tRNA(His) + AMP + diphosphate + H(+). This Legionella pneumophila (strain Paris) protein is Histidine--tRNA ligase.